A 369-amino-acid polypeptide reads, in one-letter code: Hsc70-interacting protein (369 aa).

Positions 38–97 (MGGKVPPATQKAKSEENTKEEKPDSKKVEEDLKADEPSSEESDLEIDKEGVIEPDTDAPQ) are disordered. Positions 49–73 (AKSEENTKEEKPDSKKVEEDLKADE) are enriched in basic and acidic residues. TPR repeat units lie at residues 114-147 (ANDKKVAAIEALNDGELQKAIDLFTDAIKLNPRL), 148-181 (AILYAKRASVFVKLQKPNAAIRDCDRAIEINPDS), and 182-215 (AQPYKWRGKAHRLLGHWEEAAHDLALACKLDYDE). Over residues 256–272 (KAREEHERAQREEEARR) the composition is skewed to basic and acidic residues. Residues 256–300 (KAREEHERAQREEEARRQSGAQYGSFPGGFPGGMPGNFPGGMPGM) form a disordered region. Gly residues predominate over residues 281-300 (FPGGFPGGMPGNFPGGMPGM). The 40-residue stretch at 319-358 (DPEVLAAMQDPEVMVAFQDVAQNPANMSKYQSNPKVMNLI) folds into the STI1 domain. Ser346 carries the post-translational modification Phosphoserine; by GRK5. Lys353 and Lys360 each carry N6-acetyllysine.

Belongs to the FAM10 family. Homotetramer. Interacts with HSC70 as well as DNAJ homologs and HSP90. Interacts (via the C-terminus 303- 319 AA) with GRK5.

Its subcellular location is the cytoplasm. Its function is as follows. One HIP oligomer binds the ATPase domains of at least two HSC70 molecules dependent on activation of the HSC70 ATPase by HSP40. Stabilizes the ADP state of HSC70 that has a high affinity for substrate protein. Through its own chaperone activity, it may contribute to the interaction of HSC70 with various target proteins. The protein is Hsc70-interacting protein (ST13) of Homo sapiens (Human).